A 603-amino-acid polypeptide reads, in one-letter code: Myotubularin (603 aa).

Residues 1-13 (MASASTSKYNSHS) show a composition bias toward polar residues. The interval 1–25 (MASASTSKYNSHSLENESIKRTSRD) is disordered. A phosphoserine mark is found at Ser-13 and Ser-18. Basic and acidic residues predominate over residues 14 to 25 (LENESIKRTSRD). One can recognise a GRAM domain in the interval 29–97 (RDLTEAVPRL…GVISRIEKMG (69 aa)). The region spanning 163–538 (GWTVYNPVEE…RHLELWVNYY (376 aa)) is the Myotubularin phosphatase domain. Asn-288, Asn-313, and Ile-314 together coordinate a 1,2-diacyl-sn-glycero-3-phospho-(1D-myo-inositol-3,5-bisphosphate). Positions 288, 313, and 314 each coordinate a 1,2-diacyl-sn-glycero-3-phospho-(1D-myo-inositol-3-phosphate). Cys-375 functions as the Phosphocysteine intermediate in the catalytic mechanism. The a 1,2-diacyl-sn-glycero-3-phospho-(1D-myo-inositol-3,5-bisphosphate) site is built by Ser-376, Asp-377, Gly-378, Trp-379, Asp-380, Arg-381, Lys-417, and Arg-421. A 1,2-diacyl-sn-glycero-3-phospho-(1D-myo-inositol-3-phosphate)-binding residues include Ser-376, Asp-377, Gly-378, Trp-379, Asp-380, and Arg-381. Position 421 (Arg-421) interacts with a 1,2-diacyl-sn-glycero-3-phospho-(1D-myo-inositol-3-phosphate). Thr-495 bears the Phosphothreonine mark. The segment at 579-603 (SAKLSDPPTSPSSPSQMMPHVQTHF) is disordered. Ser-588 is subject to Phosphoserine.

Belongs to the protein-tyrosine phosphatase family. Non-receptor class myotubularin subfamily. Heterodimer with MTMR12. Interacts with KMT2A/MLL1 (via SET domain). Interacts with DES in skeletal muscle but not in cardiac muscle. Interacts with SPEG.

The protein localises to the cytoplasm. Its subcellular location is the cell membrane. It localises to the cell projection. It is found in the filopodium. The protein resides in the ruffle. The protein localises to the late endosome. Its subcellular location is the myofibril. It localises to the sarcomere. It carries out the reaction a 1,2-diacyl-sn-glycero-3-phospho-(1D-myo-inositol-3-phosphate) + H2O = a 1,2-diacyl-sn-glycero-3-phospho-(1D-myo-inositol) + phosphate. The catalysed reaction is a 1,2-diacyl-sn-glycero-3-phospho-(1D-myo-inositol-3,5-bisphosphate) + H2O = a 1,2-diacyl-sn-glycero-3-phospho-(1D-myo-inositol-5-phosphate) + phosphate. The enzyme catalyses 1,2-dioctanoyl-sn-glycero-3-phospho-(1-D-myo-inositol-3-phosphate) + H2O = 1,2-dioctanoyl-sn-glycero-3-phospho-(1D-myo-inositol) + phosphate. It catalyses the reaction 1,2-dioctanoyl-sn-glycero-3-phospho-(1D-myo-inositol-3,5-bisphosphate) + H2O = 1,2-dioctanoyl-sn-glycero-3-phospho-(1D-myo-inositol-5-phosphate) + phosphate. It carries out the reaction 1,2-dihexadecanoyl-sn-glycero-3-phospho-(1D-myo-inositol-3,5-phosphate) + H2O = 1,2-dihexadecanoyl-sn-glycero-3-phospho-(1D-myo-inositol-5-phosphate) + phosphate. Allosterically activated by phosphatidylinositol 5-phosphate (PI5P). Its function is as follows. Lipid phosphatase which dephosphorylates phosphatidylinositol 3-monophosphate (PI3P) and phosphatidylinositol 3,5-bisphosphate (PI(3,5)P2). Has also been shown to dephosphorylate phosphotyrosine- and phosphoserine-containing peptides. Negatively regulates EGFR degradation through regulation of EGFR trafficking from the late endosome to the lysosome. Plays a role in vacuolar formation and morphology. Regulates desmin intermediate filament assembly and architecture. Plays a role in mitochondrial morphology and positioning. Required for skeletal muscle maintenance but not for myogenesis. In skeletal muscles, stabilizes MTMR12 protein levels. The sequence is that of Myotubularin from Pongo abelii (Sumatran orangutan).